The primary structure comprises 512 residues: Histidine ammonia-lyase (512 aa).

Positions 145–147 (ASG) form a cross-link, 5-imidazolinone (Ala-Gly). Residue serine 146 is modified to 2,3-didehydroalanine (Ser).

The protein belongs to the PAL/histidase family. Post-translationally, contains an active site 4-methylidene-imidazol-5-one (MIO), which is formed autocatalytically by cyclization and dehydration of residues Ala-Ser-Gly.

The protein localises to the cytoplasm. It carries out the reaction L-histidine = trans-urocanate + NH4(+). The protein operates within amino-acid degradation; L-histidine degradation into L-glutamate; N-formimidoyl-L-glutamate from L-histidine: step 1/3. This Pseudomonas fluorescens (strain SBW25) protein is Histidine ammonia-lyase.